Consider the following 282-residue polypeptide: Gap junction Cx32.7 protein (282 aa).

The Cytoplasmic portion of the chain corresponds to glycine 2–lysine 13. Residues valine 14 to valine 36 form a helical membrane-spanning segment. Over leucine 37–arginine 76 the chain is Extracellular. The chain crosses the membrane as a helical span at residues phenylalanine 77–valine 99. The Cytoplasmic portion of the chain corresponds to isoleucine 100–arginine 148. The chain crosses the membrane as a helical span at residues serine 149 to leucine 171. Topologically, residues tyrosine 172–valine 203 are extracellular. The chain crosses the membrane as a helical span at residues isoleucine 204 to leucine 226. Residues cysteine 227 to isoleucine 282 are Cytoplasmic-facing.

Belongs to the connexin family. Alpha-type (group II) subfamily. As to quaternary structure, a connexon is composed of a hexamer of connexins. In terms of tissue distribution, expressed equally in incompetent and competent ovaries.

It localises to the cell membrane. The protein resides in the cell junction. It is found in the gap junction. Functionally, one gap junction consists of a cluster of closely packed pairs of transmembrane channels, the connexons, through which materials of low MW diffuse from one cell to a neighboring cell. The sequence is that of Gap junction Cx32.7 protein from Micropogonias undulatus (Atlantic croaker).